The following is a 286-amino-acid chain: Phosphatidylglycerol--prolipoprotein diacylglyceryl transferase (286 aa).

Transmembrane regions (helical) follow at residues 25 to 45 (WYAL…RMLL), 65 to 85 (FILW…VLFY), 103 to 123 (GGMS…LFGW), and 127 to 147 (VPIL…LFLG). Residue arginine 148 coordinates a 1,2-diacyl-sn-glycero-3-phospho-(1'-sn-glycerol). Helical transmembrane passes span 188-208 (AGLE…AGAL), 212-232 (GLII…GEFF), and 248-268 (MGML…ITTW).

Belongs to the Lgt family.

The protein resides in the cell inner membrane. It catalyses the reaction L-cysteinyl-[prolipoprotein] + a 1,2-diacyl-sn-glycero-3-phospho-(1'-sn-glycerol) = an S-1,2-diacyl-sn-glyceryl-L-cysteinyl-[prolipoprotein] + sn-glycerol 1-phosphate + H(+). Its pathway is protein modification; lipoprotein biosynthesis (diacylglyceryl transfer). Its function is as follows. Catalyzes the transfer of the diacylglyceryl group from phosphatidylglycerol to the sulfhydryl group of the N-terminal cysteine of a prolipoprotein, the first step in the formation of mature lipoproteins. The sequence is that of Phosphatidylglycerol--prolipoprotein diacylglyceryl transferase from Rhodopseudomonas palustris (strain ATCC BAA-98 / CGA009).